We begin with the raw amino-acid sequence, 265 residues long: NAD kinase (265 aa).

D45 serves as the catalytic Proton acceptor. NAD(+) is bound by residues 45 to 46, 122 to 123, R148, D150, 161 to 166, and A185; these read DG, NE, and TAYSKS.

This sequence belongs to the NAD kinase family. The cofactor is a divalent metal cation.

The protein resides in the cytoplasm. It catalyses the reaction NAD(+) + ATP = ADP + NADP(+) + H(+). Its function is as follows. Involved in the regulation of the intracellular balance of NAD and NADP, and is a key enzyme in the biosynthesis of NADP. Catalyzes specifically the phosphorylation on 2'-hydroxyl of the adenosine moiety of NAD to yield NADP. This chain is NAD kinase, found in Lactobacillus delbrueckii subsp. bulgaricus (strain ATCC 11842 / DSM 20081 / BCRC 10696 / JCM 1002 / NBRC 13953 / NCIMB 11778 / NCTC 12712 / WDCM 00102 / Lb 14).